Here is a 351-residue protein sequence, read N- to C-terminus: Amylovoran biosynthesis glycosyltransferase AmsD (351 aa).

This sequence belongs to the glycosyltransferase group 1 family. Glycosyltransferase 4 subfamily.

The protein operates within glycan metabolism; exopolysaccharide biosynthesis. In terms of biological role, involved in the biosynthesis of amylovoran which functions as a virulence factor. May be involved in the formation of galactose alpha-1,6 linkages in amylovoran. The chain is Amylovoran biosynthesis glycosyltransferase AmsD (amsD) from Erwinia amylovora (Fire blight bacteria).